We begin with the raw amino-acid sequence, 409 residues long: MDKLLERFLHYVSLDTQSKSGVRQVPSTEGQWKLLRLLKQQLEEMGLVNITLSEKGTLMATLPANVEGDIPAIGFISHVDTSPDFSGKNVNPQIVENYRGGDIALGIGDEVLSPVMFPVLHQLLGQTLITTDGKTLLGADDKAGVAEIMTALAVLKGNPIPHGDIKVAFTPDEEVGKGAKHFDVEAFGAQWAYTVDGGGVGELEFENFNAASVNIKIVGNNVHPGTAKGVMVNALSLAARIHAEVPADEAPETTEGYEGFYHLASMKGTVDRAEMHYIIRDFDRKQFEARKRKMMEIAKKVGKGLHPDCYIELVIEDSYYNMREKVVEHPHILDIAQQAMRDCHITPEMKPIRGGTDGAQLSFMGLPCPNLFTGGYNYHGKHEFVTLEGMEKAVQVIVRIAELTAKRGQ.

His-78 is a binding site for Zn(2+). Residue Asp-80 is part of the active site. Asp-140 lines the Zn(2+) pocket. Glu-173 functions as the Proton acceptor in the catalytic mechanism. Positions 174, 196, and 379 each coordinate Zn(2+).

This sequence belongs to the peptidase M20B family. Requires Zn(2+) as cofactor.

The protein localises to the cytoplasm. It catalyses the reaction Release of the N-terminal residue from a tripeptide.. Functionally, cleaves the N-terminal amino acid of tripeptides. This is Peptidase T from Salmonella heidelberg (strain SL476).